Reading from the N-terminus, the 190-residue chain is Nuclear transcription factor Y subunit B-2 (190 aa).

A disordered region spans residues 1-30; sequence MGDSDRDSGGGQNGNNQNGQSSLSPREQDR. The DNA-binding element occupies 32-38; that stretch reads LPIANVS. A subunit association domain (SAD) region spans residues 59–70; that stretch reads MQECVSEFISFV. The interval 168–190 is disordered; the sequence is HMYGATGGGSDSGGGAASGRTRT. A compositionally biased stretch (gly residues) spans 172–184; sequence ATGGGSDSGGGAA.

Belongs to the NFYB/HAP3 subunit family. As to quaternary structure, heterotrimeric transcription factor composed of three components, NF-YA, NF-YB and NF-YC. NF-YB and NF-YC must interact and dimerize for NF-YA association and DNA binding. Binds directly with DPB3-1. As to expression, ubiquitous. Predominantly expressed in flowers and siliques.

It is found in the nucleus. In terms of biological role, component of the NF-Y/HAP transcription factor complex. The NF-Y complex stimulates the transcription of various genes by recognizing and binding to a CCAAT motif in promoters. This Arabidopsis thaliana (Mouse-ear cress) protein is Nuclear transcription factor Y subunit B-2.